The chain runs to 257 residues: Imidazole glycerol phosphate synthase subunit HisF (257 aa).

Catalysis depends on residues D11 and D130.

It belongs to the HisA/HisF family. In terms of assembly, heterodimer of HisH and HisF.

It localises to the cytoplasm. It catalyses the reaction 5-[(5-phospho-1-deoxy-D-ribulos-1-ylimino)methylamino]-1-(5-phospho-beta-D-ribosyl)imidazole-4-carboxamide + L-glutamine = D-erythro-1-(imidazol-4-yl)glycerol 3-phosphate + 5-amino-1-(5-phospho-beta-D-ribosyl)imidazole-4-carboxamide + L-glutamate + H(+). It functions in the pathway amino-acid biosynthesis; L-histidine biosynthesis; L-histidine from 5-phospho-alpha-D-ribose 1-diphosphate: step 5/9. Its function is as follows. IGPS catalyzes the conversion of PRFAR and glutamine to IGP, AICAR and glutamate. The HisF subunit catalyzes the cyclization activity that produces IGP and AICAR from PRFAR using the ammonia provided by the HisH subunit. This is Imidazole glycerol phosphate synthase subunit HisF from Aliivibrio fischeri (strain ATCC 700601 / ES114) (Vibrio fischeri).